Consider the following 185-residue polypeptide: Pericyclase pydY (185 aa).

This sequence belongs to the pericyclase pydY family.

It participates in mycotoxin biosynthesis. Functionally, pericyclase; part of the gene cluster that mediates the biosynthesis of pyrrocidines, fungal natural products containing a macrocyclic para-cyclophane connected to a decahydrofluorene ring system that show potent antibiotic activities toward Gram-negative bacteria. Within the pathway, pydY is involved in the late Diels-Alder cycloaddition step that leads to the formation of the decahydrofluorene core. The pathway begins with the PKS-NRPS pydA which, with the help of the trans-enoyl reductase pydC, synthesizes the polyketide-tyrosyl acyl thioester product which can be reductively off-loaded by the terminal reductase (R) domain in pydA. The alpha/beta hydrolase pydG is then required to catalyze the subsequent Knoevenagel condensation that affords the 3-pyrrolin-2-one ring, whereas the four proteins pydB, pydE, pydX and pydZ then function synergistically to form the cyclophane. PydB and the membrane-bound pydX and pydZ are lipid-binding proteins that can sequester and mold the pdyG product into the inverse S-shape. Binding of the medium chain reductase pydE to the complex would trigger the cascade oxidative cyclization. PydY is involved in the Diels-Alder cycloaddition that forms the decahydrofluorene core. Additional non-enzymatic hydroxylation yields pyrrocidine A2 which can be further reduced into pyrrocidine B by an endogenous reductase. This chain is Pericyclase pydY, found in Acremonium sp.